The sequence spans 971 residues: Isoleucine--tRNA ligase (971 aa).

The 'HIGH' region signature appears at 60 to 70 (PYANGDLHIGH). E563 serves as a coordination point for L-isoleucyl-5'-AMP. The short motif at 604–608 (KMSKS) is the 'KMSKS' region element. Residue K607 participates in ATP binding. C922, C925, C942, and C945 together coordinate Zn(2+).

It belongs to the class-I aminoacyl-tRNA synthetase family. IleS type 1 subfamily. Monomer. Requires Zn(2+) as cofactor.

The protein resides in the cytoplasm. The enzyme catalyses tRNA(Ile) + L-isoleucine + ATP = L-isoleucyl-tRNA(Ile) + AMP + diphosphate. Catalyzes the attachment of isoleucine to tRNA(Ile). As IleRS can inadvertently accommodate and process structurally similar amino acids such as valine, to avoid such errors it has two additional distinct tRNA(Ile)-dependent editing activities. One activity is designated as 'pretransfer' editing and involves the hydrolysis of activated Val-AMP. The other activity is designated 'posttransfer' editing and involves deacylation of mischarged Val-tRNA(Ile). This chain is Isoleucine--tRNA ligase, found in Acaryochloris marina (strain MBIC 11017).